Here is a 116-residue protein sequence, read N- to C-terminus: Nicotine metabolites export pump subunit NepA (116 aa).

Transmembrane regions (helical) follow at residues 10-30 (LTIW…TSLL), 42-62 (TVAV…ILKF), 67-87 (IAYA…GVLF), and 92-112 (FSWK…TLNL).

The protein belongs to the drug/metabolite transporter (DMT) superfamily. Small multidrug resistance (SMR) (TC 2.A.7.1) family. NepA/NepB subfamily. In terms of assembly, the efflux pump is composed of NepA and NepB.

The protein localises to the cell membrane. Component of an efflux pump responsible for the transport of nicotine breakdown products, in particular methylamine, out of the cell. This pump apparently serves as a metabolic valve for nicotine catabolites and may protect the bacteria from the potentially toxic side effects of these compounds. The sequence is that of Nicotine metabolites export pump subunit NepA (nepA) from Paenarthrobacter nicotinovorans (Arthrobacter nicotinovorans).